The primary structure comprises 282 residues: MYFKRYLQLAKPGIIFGNLITLTGGFLLATHREIGFEYLPLFVYVMIGVALMIAAGCVFNNIYDKDIDSSMTRTQNRPLVTGDISVIQATIYGTILLILSCLVLYYLVNLLTLWIIIIGFIVYVGIYTVSKRLTIHATVLGGISGAIPPVAGYTAVVNILDYNALALFLILFFWQIPHSYAIAMLYIDDYKKVKLPMLPIVKGIACTKKIMLFYLALFVVSCALPAVLGSADLFSFIVCMLVALFWMYKSIQSYRTDTDRVFAKTVFKFSIIVITAICLTMG.

9 consecutive transmembrane segments (helical) span residues 9–29 (LAKP…FLLA), 39–59 (LPLF…GCVF), 79–99 (LVTG…LLIL), 102–122 (LVLY…GFIV), 139–159 (VLGG…VVNI), 165–185 (LALF…IAML), 210–230 (IMLF…VLGS), 231–251 (ADLF…YKSI), and 261–281 (VFAK…CLTM).

Belongs to the UbiA prenyltransferase family. Protoheme IX farnesyltransferase subfamily.

The protein localises to the cell inner membrane. It catalyses the reaction heme b + (2E,6E)-farnesyl diphosphate + H2O = Fe(II)-heme o + diphosphate. It participates in porphyrin-containing compound metabolism; heme O biosynthesis; heme O from protoheme: step 1/1. Its function is as follows. Converts heme B (protoheme IX) to heme O by substitution of the vinyl group on carbon 2 of heme B porphyrin ring with a hydroxyethyl farnesyl side group. This is Protoheme IX farnesyltransferase from Francisella tularensis subsp. holarctica (strain FTNF002-00 / FTA).